The following is a 188-amino-acid chain: NANOG neighbor homeobox (188 aa).

The disordered stretch occupies residues 28 to 106 (ETILANKKQS…NEKQKQYPEK (79 aa)). Residues 57–106 (QNGKQKWREEGEAGRKREREKEEKNEKELQDEQENKRKRENEKQKQYPEK) are compositionally biased toward basic and acidic residues. Residues 102–161 (QYPEKRLVSKSLMHTLWAKFKLNRCPTIQESLSLSFEFDMTHKQISQWFCKTRKKYNKEM) constitute a DNA-binding region (homeobox).

Its subcellular location is the nucleus. The polypeptide is NANOG neighbor homeobox (NANOGNB) (Homo sapiens (Human)).